The following is a 276-amino-acid chain: MERRWVFVLLDVLCVLVASLPFIILTLVNAPYKRGFYCGDDSIRYPYRPDTITHGLMAGVIITATVVLVSSGEAYLVYTDRLYSRSDFNNYVAAIYKVLGTFLFGAAVSQSLTDLAKYMIGRLRPSFLAVCDPDWSRVNCSGYVQVEVCRGSPANVTEARLSFYSGHSSFGMYCMLFLALYVQARLCWKWARLLRPTVQFFLVAFAIYVGYTRVSDNKHHWSDVLVGLLQGALVACLTVCYVSDFFKSRPPQSCQENEESERKPSLSLTLTLGDRP.

Residues 1 to 4 (MERR) are Cytoplasmic-facing. Residues 5 to 25 (WVFVLLDVLCVLVASLPFIIL) form a helical membrane-spanning segment. The Lumenal segment spans residues 26-51 (TLVNAPYKRGFYCGDDSIRYPYRPDT). A helical membrane pass occupies residues 52–72 (ITHGLMAGVIITATVVLVSSG). Residues 73-87 (EAYLVYTDRLYSRSD) lie on the Cytoplasmic side of the membrane. A helical membrane pass occupies residues 88–108 (FNNYVAAIYKVLGTFLFGAAV). Topologically, residues 109-161 (SQSLTDLAKYMIGRLRPSFLAVCDPDWSRVNCSGYVQVEVCRGSPANVTEARL) are lumenal. Positions 117–125 (KYMIGRLRP) are phosphatase sequence motif I. 2 N-linked (GlcNAc...) asparagine glycosylation sites follow: Asn139 and Asn155. Residues 162–182 (SFYSGHSSFGMYCMLFLALYV) traverse the membrane as a helical segment. The tract at residues 164–167 (YSGH) is phosphatase sequence motif II. His167 (proton donors) is an active-site residue. Residues 183 to 189 (QARLCWK) are Cytoplasmic-facing. A helical transmembrane segment spans residues 190–210 (WARLLRPTVQFFLVAFAIYVG). The Lumenal segment spans residues 211 to 225 (YTRVSDNKHHWSDVL). The interval 212–223 (TRVSDNKHHWSD) is phosphatase sequence motif III. His219 functions as the Nucleophile in the catalytic mechanism. Residues 226-246 (VGLLQGALVACLTVCYVSDFF) traverse the membrane as a helical segment. The Cytoplasmic portion of the chain corresponds to 247–276 (KSRPPQSCQENEESERKPSLSLTLTLGDRP). Residues 252-276 (QSCQENEESERKPSLSLTLTLGDRP) form a disordered region.

Belongs to the PA-phosphatase related phosphoesterase family. In terms of assembly, forms functional homodimers and homooligomers. Can also form heterooligomers with PLPP1 and PLPP3. In terms of processing, N-glycosylated. Expressed in the brain.

Its subcellular location is the membrane. It localises to the cell membrane. The protein localises to the early endosome membrane. The protein resides in the endoplasmic reticulum membrane. The enzyme catalyses a 1,2-diacyl-sn-glycero-3-phosphate + H2O = a 1,2-diacyl-sn-glycerol + phosphate. It carries out the reaction 1,2-dihexadecanoyl-sn-glycero-3-phosphate + H2O = 1,2-dihexadecanoyl-sn-glycerol + phosphate. It catalyses the reaction 1,2-di-(9Z-octadecenoyl)-sn-glycero-3-phosphate + H2O = 1,2-di-(9Z-octadecenoyl)-sn-glycerol + phosphate. The catalysed reaction is a monoacyl-sn-glycero-3-phosphate + H2O = a monoacylglycerol + phosphate. The enzyme catalyses (9Z)-octadecenoyl-sn-glycero-3-phosphate + H2O = (9Z-octadecenoyl)-glycerol + phosphate. It carries out the reaction sphing-4-enine 1-phosphate + H2O = sphing-4-enine + phosphate. It catalyses the reaction an N-acylsphing-4-enine 1-phosphate + H2O = an N-acylsphing-4-enine + phosphate. The catalysed reaction is N-(octanoyl)-sphing-4-enine-1-phosphate + H2O = N-octanoylsphing-4-enine + phosphate. The enzyme catalyses N-(9Z-octadecenoyl)-ethanolamine phosphate + H2O = N-(9Z-octadecenoyl) ethanolamine + phosphate. Its pathway is lipid metabolism; phospholipid metabolism. Magnesium-independent phospholipid phosphatase. Insensitive to N-ethylmaleimide. Magnesium-independent phospholipid phosphatase that catalyzes the dephosphorylation of a variety of glycerolipid and sphingolipid phosphate esters including phosphatidate/PA, lysophosphatidate/LPA, sphingosine 1-phosphate/S1P and ceramide 1-phosphate/C1P. Has no apparent extracellular phosphatase activity and therefore most probably acts intracellularly. Also acts on N-oleoyl ethanolamine phosphate/N-(9Z-octadecenoyl)-ethanolamine phosphate, a potential physiological compound. Through dephosphorylation of these bioactive lipid mediators produces new bioactive compounds and may regulate signal transduction in different cellular processes. Indirectly regulates, for instance, cell cycle G1/S phase transition through its phospholipid phosphatase activity. The polypeptide is Phospholipid phosphatase 2 (Rattus norvegicus (Rat)).